The primary structure comprises 875 residues: Translation initiation factor IF-2 (875 aa).

3 disordered regions span residues 1-20, 47-102, and 126-246; these read MSDS…LKTA, LMGR…LREA, and EEER…DRRG. A compositionally biased stretch (low complexity) spans 54–66; sequence AAPTAAPAAAATP. A compositionally biased stretch (pro residues) spans 67–85; it reads APTPVAPPPPPPPPPPPPS. 2 stretches are compositionally biased toward basic and acidic residues: residues 88 to 102 and 126 to 140; these read RETR…LREA and EEER…RAEA. 2 stretches are compositionally biased toward low complexity: residues 141–195 and 202–221; these read EAAA…PAAP and PAAP…PAAP. Residues 223–246 show a composition bias toward basic and acidic residues; that stretch reads KRPELAAKKPAHPQRDRKTEDRRG. Positions 374–544 constitute a tr-type G domain; that stretch reads ARPPVVTIMG…LLQAELLELK (171 aa). Positions 383-390 are G1; sequence GHVDHGKT. 383–390 serves as a coordination point for GTP; it reads GHVDHGKT. The interval 408–412 is G2; it reads GITQH. The interval 430–433 is G3; that stretch reads DTPG. GTP contacts are provided by residues 430 to 434 and 484 to 487; these read DTPGH and TKAD. A G4 region spans residues 484–487; sequence TKAD. Residues 520–522 form a G5 region; sequence SAK.

It belongs to the TRAFAC class translation factor GTPase superfamily. Classic translation factor GTPase family. IF-2 subfamily.

It localises to the cytoplasm. Its function is as follows. One of the essential components for the initiation of protein synthesis. Protects formylmethionyl-tRNA from spontaneous hydrolysis and promotes its binding to the 30S ribosomal subunits. Also involved in the hydrolysis of GTP during the formation of the 70S ribosomal complex. The polypeptide is Translation initiation factor IF-2 (Novosphingobium aromaticivorans (strain ATCC 700278 / DSM 12444 / CCUG 56034 / CIP 105152 / NBRC 16084 / F199)).